The chain runs to 264 residues: MATTATEATKTTAPAQEQQANGNGNGEQKTRHSEVGHKSLLKSDDLYQYILDTSVYPREPESMKELREITAKHPWNLMTTSADEGQFLNMLIKLIGAKKTMEIGVYTGYSLLATALALPEDGTILAMDINRENYELGLPCINKAGVGHKIDFREGPALPVLDDLVADKEQHGSFDFAFVDADKDNYLNYHERLLKLVRPGGLIGYDNTLWNGSVVLPDDAPMRKYIRFYRDFVLALNSALAADDRVEICQLPVGDGVTLCRRVK.

Over residues M1–A20 the composition is skewed to low complexity. Residues M1 to H37 form a disordered region. The segment covering Q28–H37 has biased composition (basic and acidic residues). K38 provides a ligand contact to substrate. S-adenosyl-L-methionine-binding positions include T80, E102, G104–V105, S110, D128, and A157. Residue D180 participates in substrate binding. D180 provides a ligand contact to a divalent metal cation. An S-adenosyl-L-methionine-binding site is contributed by D182. Positions 206 and 207 each coordinate a divalent metal cation. Residue N211 participates in substrate binding.

The protein belongs to the class I-like SAM-binding methyltransferase superfamily. Cation-dependent O-methyltransferase family. CCoAMT subfamily. A divalent metal cation is required as a cofactor.

It catalyses the reaction (E)-caffeoyl-CoA + S-adenosyl-L-methionine = (E)-feruloyl-CoA + S-adenosyl-L-homocysteine + H(+). Its pathway is aromatic compound metabolism; phenylpropanoid biosynthesis. In terms of biological role, methylates caffeoyl-CoA to feruloyl-CoA and 5-hydroxyferuloyl-CoA to sinapoyl-CoA. Plays a role in the synthesis of feruloylated polysaccharides. Involved in the reinforcement of the plant cell wall. Also involved in the responding to wounding or pathogen challenge by the increased formation of cell wall-bound ferulic acid polymers. The protein is Caffeoyl-CoA O-methyltransferase 2 (CCOAOMT2) of Zea mays (Maize).